A 446-amino-acid chain; its full sequence is Probable glycine dehydrogenase (decarboxylating) subunit 1 (446 aa).

It belongs to the GcvP family. N-terminal subunit subfamily. As to quaternary structure, the glycine cleavage system is composed of four proteins: P, T, L and H. In this organism, the P 'protein' is a heterodimer of two subunits.

The enzyme catalyses N(6)-[(R)-lipoyl]-L-lysyl-[glycine-cleavage complex H protein] + glycine + H(+) = N(6)-[(R)-S(8)-aminomethyldihydrolipoyl]-L-lysyl-[glycine-cleavage complex H protein] + CO2. Its function is as follows. The glycine cleavage system catalyzes the degradation of glycine. The P protein binds the alpha-amino group of glycine through its pyridoxal phosphate cofactor; CO(2) is released and the remaining methylamine moiety is then transferred to the lipoamide cofactor of the H protein. This chain is Probable glycine dehydrogenase (decarboxylating) subunit 1, found in Protochlamydia amoebophila (strain UWE25).